The chain runs to 490 residues: MSQVIKKKRNTFMIGTEYILNSTQLEEAIKSFVHDFCAEKHEIHDQPVVVEAKEHQEDKIKQIKIPEKGRPVNEVVSEMMNEVYRYRGDANHPRFFSFVPGPASSVSWLGDIMTSAYNIHAGGSKLAPMVNCIEQEVLKWLAKQVGFTENPGGVFVSGGSMANITALTAARDNKLTDINLHLGTAYISDQTHSSVAKGLRIIGITDSRIRRIPTNSHFQMDTTKLEEAIETDKKSGYIPFVVIGTAGTTNTGSIDPLTEISALCKKHDMWFHIDGAYGASVLLSPKYKSLLTGTGLADSISWDAHKWLFQTYGCAMVLVKDIRNLFHSFHVNPEYLKDLENDIDNVNTWDIGMELTRPARGLKLWLTLQVLGSDLIGSAIEHGFQLAVWAEEALNPKKDWEIVSPAQMAMINFRYAPKDLTKEEQDILNEKISHRILESGYAAIFTTVLNGKTVLRICAIHPEATQEDMQHTIDLLDQYGREIYTEMKKA.

At Lys306 the chain carries N6-(pyridoxal phosphate)lysine.

Belongs to the group II decarboxylase family. In terms of assembly, homodimer. Pyridoxal 5'-phosphate is required as a cofactor.

The protein localises to the cytoplasm. It carries out the reaction L-tryptophan + H(+) = tryptamine + CO2. Its activity is regulated as follows. Inhibited by (S)-alpha-fluoromethyltryptophan. Catalyzes the decarboxylation of tryptophan to tryptamine. Tryptamine is a neurotransmitter that induces the release of serotonin, which is suggested to modulate gastrointestinal motility. Therefore, the tryptophan decarboxylase from the gut bacteria Ruminococcus gnavus (strain ATCC 29149 / VPI C7-9) may influence host brain and behavior. Has weak activity with tyrosine and phenylalanine. The sequence is that of Tryptophan decarboxylase from Mediterraneibacter gnavus (strain ATCC 29149 / DSM 114966 / JCM 6515 / VPI C7-9) (Ruminococcus gnavus).